The following is a 2292-amino-acid chain: Protein Ycf2 (2292 aa).

Residue 1640 to 1647 (GSIGIGRS) participates in ATP binding.

Belongs to the Ycf2 family.

The protein resides in the plastid. Its subcellular location is the chloroplast stroma. Functionally, probable ATPase of unknown function. Its presence in a non-photosynthetic plant (Epifagus virginiana) and experiments in tobacco indicate that it has an essential function which is probably not related to photosynthesis. This chain is Protein Ycf2, found in Liriodendron tulipifera (Tuliptree).